The sequence spans 209 residues: Guanylate kinase (209 aa).

Positions 9-188 constitute a Guanylate kinase-like domain; the sequence is GIMLVMSSPS…SVQQIKSIFI (180 aa). ATP is bound at residue 16–23; sequence SPSGGGKT.

It belongs to the guanylate kinase family.

It localises to the cytoplasm. The enzyme catalyses GMP + ATP = GDP + ADP. In terms of biological role, essential for recycling GMP and indirectly, cGMP. In Ehrlichia ruminantium (strain Gardel), this protein is Guanylate kinase.